The following is a 224-amino-acid chain: UPF0758 protein SPO0054 (224 aa).

An MPN domain is found at 102–224 (VISSWDALLD…ELSFRAEGYL (123 aa)). Zn(2+)-binding residues include His173, His175, and Asp186. The JAMM motif motif lies at 173–186 (HNHPSGDPTPSQSD).

It belongs to the UPF0758 family.

The chain is UPF0758 protein SPO0054 from Ruegeria pomeroyi (strain ATCC 700808 / DSM 15171 / DSS-3) (Silicibacter pomeroyi).